A 192-amino-acid polypeptide reads, in one-letter code: tRNA (pseudouridine(54)-N(1))-methyltransferase (192 aa).

Residues leucine 114 and glycine 138 each coordinate S-adenosyl-L-methionine.

This sequence belongs to the methyltransferase superfamily. TrmY family. Homodimer.

It is found in the cytoplasm. The enzyme catalyses pseudouridine(54) in tRNA + S-adenosyl-L-methionine = N(1)-methylpseudouridine(54) in tRNA + S-adenosyl-L-homocysteine + H(+). In terms of biological role, specifically catalyzes the N1-methylation of pseudouridine at position 54 (Psi54) in tRNAs. In Aeropyrum pernix (strain ATCC 700893 / DSM 11879 / JCM 9820 / NBRC 100138 / K1), this protein is tRNA (pseudouridine(54)-N(1))-methyltransferase.